Here is a 4246-residue protein sequence, read N- to C-terminus: Intermembrane lipid transfer protein vps13F (4246 aa).

In terms of domain architecture, Chorein N-terminal spans Phe-2–Leu-113. 16 disordered regions span residues Ile-141–Asp-271, Pro-401–Lys-420, Lys-591–Gly-759, Val-914–Leu-944, Lys-964–Glu-1014, Gln-1217–Pro-1251, Ile-1356–Asp-1379, Tyr-1395–Lys-1436, Arg-1622–Ser-1683, Leu-2101–Gln-2131, His-2211–Lys-2237, Gln-2471–Gln-2513, Leu-2704–Lys-2756, Ile-3421–Leu-3449, Lys-3611–Asn-3652, and Asn-3794–Glu-3813. Residues Asn-168–Leu-201 are compositionally biased toward low complexity. Positions Asn-207 to Asp-217 are enriched in basic and acidic residues. Acidic residues predominate over residues Thr-218–Asp-271. Composition is skewed to low complexity over residues Pro-401–Pro-413 and Gln-597–Thr-658. Positions Asp-659–Gly-668 are enriched in basic and acidic residues. Residues Asp-669–Asp-680 show a composition bias toward low complexity. Residues Asn-681–Asn-702 are compositionally biased toward basic and acidic residues. Low complexity-rich tracts occupy residues Ser-725 to Gln-747 and Val-914 to Pro-924. Basic and acidic residues-rich tracts occupy residues Ser-925–Leu-944 and Asp-987–Ser-1001. The segment covering Gln-1217–Asn-1241 has biased composition (low complexity). Positions Ser-1400–Asn-1409 are enriched in acidic residues. 2 stretches are compositionally biased toward basic and acidic residues: residues Asp-1410 to Lys-1431 and Arg-1622 to Asn-1634. Residues Gln-1644–Gln-1670 are compositionally biased toward low complexity. 5 stretches are compositionally biased toward low complexity: residues Gln-2471–Asn-2506, Ser-2705–Thr-2755, Asp-3430–Leu-3449, Leu-3613–Asn-3652, and Asn-3794–Asn-3809.

This sequence belongs to the VPS13 family.

It localises to the membrane. Its function is as follows. Mediates the transfer of lipids between membranes at organelle contact sites. In Dictyostelium discoideum (Social amoeba), this protein is Intermembrane lipid transfer protein vps13F (vps13F).